Reading from the N-terminus, the 98-residue chain is Large ribosomal subunit protein uL23 (98 aa).

This sequence belongs to the universal ribosomal protein uL23 family. As to quaternary structure, part of the 50S ribosomal subunit. Contacts protein L29, and trigger factor when it is bound to the ribosome.

One of the early assembly proteins it binds 23S rRNA. One of the proteins that surrounds the polypeptide exit tunnel on the outside of the ribosome. Forms the main docking site for trigger factor binding to the ribosome. In Koribacter versatilis (strain Ellin345), this protein is Large ribosomal subunit protein uL23.